The sequence spans 107 residues: Nucleoid-associated protein CE0210 (107 aa).

This sequence belongs to the YbaB/EbfC family. As to quaternary structure, homodimer.

The protein localises to the cytoplasm. It is found in the nucleoid. Binds to DNA and alters its conformation. May be involved in regulation of gene expression, nucleoid organization and DNA protection. In Corynebacterium efficiens (strain DSM 44549 / YS-314 / AJ 12310 / JCM 11189 / NBRC 100395), this protein is Nucleoid-associated protein CE0210.